Reading from the N-terminus, the 114-residue chain is Nucleoid-associated protein THEYE_A1069 (114 aa).

Belongs to the YbaB/EbfC family. Homodimer.

The protein localises to the cytoplasm. Its subcellular location is the nucleoid. Its function is as follows. Binds to DNA and alters its conformation. May be involved in regulation of gene expression, nucleoid organization and DNA protection. This chain is Nucleoid-associated protein THEYE_A1069, found in Thermodesulfovibrio yellowstonii (strain ATCC 51303 / DSM 11347 / YP87).